A 427-amino-acid chain; its full sequence is Probable WRKY transcription factor 35 (427 aa).

Disordered regions lie at residues 1 to 45 (MDNF…DLHV) and 266 to 336 (YTSE…HPPF). Residues 23–40 (SPGPPEGPSPSSMSPPPT) are compositionally biased toward pro residues. A DNA-binding region (WRKY) is located at residues 209–275 (SGEVVPSDLW…YTSEHNHPWP (67 aa)). Over residues 284–310 (STRSSSSSSLNPSSKSSTAAATTSPSS) the composition is skewed to low complexity. Residues 311–333 (RVFQNNSSKDEPNNSNLPSSSTH) show a composition bias toward polar residues.

This sequence belongs to the WRKY group II-e family.

It is found in the nucleus. In terms of biological role, transcription factor. Interacts specifically with the W box (5'-(T)TGAC[CT]-3'), a frequently occurring elicitor-responsive cis-acting element. The chain is Probable WRKY transcription factor 35 (WRKY35) from Arabidopsis thaliana (Mouse-ear cress).